A 210-amino-acid polypeptide reads, in one-letter code: ATP-dependent Clp protease proteolytic subunit (210 aa).

The active-site Nucleophile is the serine 106. Histidine 131 is a catalytic residue.

It belongs to the peptidase S14 family. Fourteen ClpP subunits assemble into 2 heptameric rings which stack back to back to give a disk-like structure with a central cavity, resembling the structure of eukaryotic proteasomes.

Its subcellular location is the cytoplasm. It catalyses the reaction Hydrolysis of proteins to small peptides in the presence of ATP and magnesium. alpha-casein is the usual test substrate. In the absence of ATP, only oligopeptides shorter than five residues are hydrolyzed (such as succinyl-Leu-Tyr-|-NHMec, and Leu-Tyr-Leu-|-Tyr-Trp, in which cleavage of the -Tyr-|-Leu- and -Tyr-|-Trp bonds also occurs).. In terms of biological role, cleaves peptides in various proteins in a process that requires ATP hydrolysis. Has a chymotrypsin-like activity. Plays a major role in the degradation of misfolded proteins. This Azospirillum brasilense protein is ATP-dependent Clp protease proteolytic subunit.